The chain runs to 223 residues: MDLASLRAQQIELASSVCREDRLDKDPPAFIGGADVGFEQGGEVTRAAMVLLKYPSLELVEYKVARIATTMPYIPGFLSFREYPALLAAWEQLSQKPDLLFVDGHGISHPRRLGVASHFGLLVDVPTIGVAKKRLCGKFEPLSAEPGALSPLMDKGEQLAWVWRSKARCNPLFIATGHRVSTDSALAWVQRCMKGYRLPEPTRWADAVASGRPAFVRWQEIQR.

The Mg(2+) site is built by Asp35 and Asp103.

Belongs to the endonuclease V family. The cofactor is Mg(2+).

Its subcellular location is the cytoplasm. The catalysed reaction is Endonucleolytic cleavage at apurinic or apyrimidinic sites to products with a 5'-phosphate.. Its function is as follows. DNA repair enzyme involved in the repair of deaminated bases. Selectively cleaves double-stranded DNA at the second phosphodiester bond 3' to a deoxyinosine leaving behind the intact lesion on the nicked DNA. The polypeptide is Endonuclease V (Salmonella agona (strain SL483)).